Consider the following 142-residue polypeptide: MLQHKILGLDVGSRTVGIAISDIMGWTAQGLDTLRINEENNELGIDQLVDIIKKHNVGTVVIGLPKNMNNSIGFRGEASLTYKEKLLEAYPSIEIVMWDERLSTMAAERSLLEADVSRQKRKQVIDKMAAVFILQGYLDSLH.

Belongs to the YqgF nuclease family.

The protein resides in the cytoplasm. Functionally, could be a nuclease involved in processing of the 5'-end of pre-16S rRNA. The chain is Putative pre-16S rRNA nuclease from Staphylococcus aureus (strain JH1).